The primary structure comprises 130 residues: Small ribosomal subunit protein uS9 (130 aa).

The protein belongs to the universal ribosomal protein uS9 family.

This Exiguobacterium sibiricum (strain DSM 17290 / CCUG 55495 / CIP 109462 / JCM 13490 / 255-15) protein is Small ribosomal subunit protein uS9.